The chain runs to 229 residues: Cytidylate kinase (229 aa).

12–20 lines the ATP pocket; sequence GPSGVGKST.

The protein belongs to the cytidylate kinase family. Type 1 subfamily.

It localises to the cytoplasm. The enzyme catalyses CMP + ATP = CDP + ADP. It carries out the reaction dCMP + ATP = dCDP + ADP. In Mesomycoplasma hyopneumoniae (strain 232) (Mycoplasma hyopneumoniae), this protein is Cytidylate kinase.